The primary structure comprises 342 residues: Isopentenyl-diphosphate delta-isomerase (342 aa).

11-12 (RK) provides a ligand contact to substrate. FMN-binding positions include Ser68, 69-71 (SMT), Ser99, and Asn127. A substrate-binding site is contributed by 99 to 101 (SMR). Residue Glu163 participates in Mg(2+) binding. FMN-binding positions include Lys194, Thr224, and 295 to 296 (AG).

The protein belongs to the IPP isomerase type 2 family. In terms of assembly, homooctamer. Dimer of tetramers. FMN serves as cofactor. The cofactor is NADPH. Requires Mg(2+) as cofactor.

Its subcellular location is the cytoplasm. The catalysed reaction is isopentenyl diphosphate = dimethylallyl diphosphate. In terms of biological role, involved in the biosynthesis of isoprenoids. Catalyzes the 1,3-allylic rearrangement of the homoallylic substrate isopentenyl (IPP) to its allylic isomer, dimethylallyl diphosphate (DMAPP). This chain is Isopentenyl-diphosphate delta-isomerase, found in Rickettsia prowazekii (strain Madrid E).